Reading from the N-terminus, the 78-residue chain is DNA-directed RNA polymerase subunit Rpo5 (78 aa).

It belongs to the archaeal Rpo5/eukaryotic RPB5 RNA polymerase subunit family. Part of the RNA polymerase complex.

The protein resides in the cytoplasm. The enzyme catalyses RNA(n) + a ribonucleoside 5'-triphosphate = RNA(n+1) + diphosphate. DNA-dependent RNA polymerase (RNAP) catalyzes the transcription of DNA into RNA using the four ribonucleoside triphosphates as substrates. This is DNA-directed RNA polymerase subunit Rpo5 from Methanococcus maripaludis (strain C7 / ATCC BAA-1331).